A 374-amino-acid chain; its full sequence is Calcium/calmodulin-dependent protein kinase type 1 (374 aa).

The region spanning 20-276 (YDFRDVLGTG…CEQALQHPWI (257 aa)) is the Protein kinase domain. ATP is bound by residues 26-34 (LGTGAFSEV) and Lys-49. Lys-59 participates in a covalent cross-link: Glycyl lysine isopeptide (Lys-Gly) (interchain with G-Cter in ubiquitin). Residue Asp-141 is the Proton acceptor of the active site. Position 177 is a phosphothreonine; by CaMKK1 and CaMKK2 (Thr-177). The Involved in nuclear import motif lies at 263-264 (KR). An autoinhibitory domain region spans residues 276–316 (IAGDTALDKNIHQSVSEQIKKNFAKSKWKQAFNATAVVRHM). The tract at residues 296 to 317 (KNFAKSKWKQAFNATAVVRHMR) is calmodulin-binding. The Nuclear export signal signature appears at 315 to 321 (HMRKLQL).

The protein belongs to the protein kinase superfamily. CAMK Ser/Thr protein kinase family. CaMK subfamily. As to quaternary structure, monomer. Interacts with XPO1. Phosphorylated by CaMKK1 and CaMKK2 on Thr-177. In terms of processing, polybiquitinated by the E3 ubiquitin-protein ligase complex SCF(FBXL12), leading to proteasomal degradation. Widely expressed.

The protein resides in the cytoplasm. It localises to the nucleus. The enzyme catalyses L-seryl-[protein] + ATP = O-phospho-L-seryl-[protein] + ADP + H(+). It catalyses the reaction L-threonyl-[protein] + ATP = O-phospho-L-threonyl-[protein] + ADP + H(+). With respect to regulation, activated by Ca(2+)/calmodulin. Binding of calmodulin results in conformational change that relieves intrasteric autoinhibition and allows phosphorylation of Thr-177 within the activation loop by CaMKK1 or CaMKK2. Phosphorylation of Thr-177 results in several fold increase in total activity. Unlike CaMK4, is unable to exhibit autonomous activity after Ca(2+)/calmodulin activation. Its function is as follows. Calcium/calmodulin-dependent protein kinase that operates in the calcium-triggered CaMKK-CaMK1 signaling cascade and, upon calcium influx, regulates transcription activators activity, cell cycle, hormone production, cell differentiation, actin filament organization and neurite outgrowth. Recognizes the substrate consensus sequence [MVLIF]-x-R-x(2)-[ST]-x(3)-[MVLIF]. Regulates axonal extension and growth cone motility in hippocampal and cerebellar nerve cells. Upon NMDA receptor-mediated Ca(2+) elevation, promotes dendritic growth in hippocampal neurons and is essential in synapses for full long-term potentiation (LTP) and ERK2-dependent translational activation. Downstream of NMDA receptors, promotes the formation of spines and synapses in hippocampal neurons by phosphorylating ARHGEF7/BETAPIX on 'Ser-516', which results in the enhancement of ARHGEF7 activity and activation of RAC1. Promotes neuronal differentiation and neurite outgrowth by activation and phosphorylation of MARK2 on 'Ser-91', 'Ser-92', 'Ser-93' and 'Ser-294'. Promotes nuclear export of HDAC5 and binding to 14-3-3 by phosphorylation of 'Ser-259' and 'Ser-498' in the regulation of muscle cell differentiation. Regulates NUMB-mediated endocytosis by phosphorylation of NUMB on 'Ser-275' and 'Ser-294'. Involved in the regulation of basal and estrogen-stimulated migration of medulloblastoma cells through ARHGEF7/BETAPIX phosphorylation. Is required for proper activation of cyclin-D1/CDK4 complex during G1 progression in diploid fibroblasts. Plays a role in K(+) and ANG2-mediated regulation of the aldosterone synthase (CYP11B2) to produce aldosterone in the adrenal cortex. Phosphorylates EIF4G3/eIF4GII. In vitro phosphorylates CREB1, ATF1, CFTR, MYL9 and SYN1/synapsin I. The polypeptide is Calcium/calmodulin-dependent protein kinase type 1 (Camk1) (Rattus norvegicus (Rat)).